Reading from the N-terminus, the 242-residue chain is AA9 family lytic polysaccharide monooxygenase F (242 aa).

Positions 1–20 (MVQFKLSTASLLALASYAAA) are cleaved as a signal peptide. Position 21 (H21) interacts with Cu(2+). The segment at 31-53 (GQTYPGADPHNPNPESPGWQAEN) is disordered. Cystine bridges form between C71/C192 and C112/C116. H101 lines the Cu(2+) pocket. Residues H178 and Q187 each contribute to the O2 site. Cu(2+) is bound at residue Y189.

Belongs to the polysaccharide monooxygenase AA9 family. It depends on Cu(2+) as a cofactor.

The protein resides in the secreted. It catalyses the reaction [(1-&gt;4)-beta-D-glucosyl]n+m + reduced acceptor + O2 = 4-dehydro-beta-D-glucosyl-[(1-&gt;4)-beta-D-glucosyl]n-1 + [(1-&gt;4)-beta-D-glucosyl]m + acceptor + H2O.. Lytic polysaccharide monooxygenase (LPMO) that depolymerizes crystalline and amorphous polysaccharides via the oxidation of scissile alpha- or beta-(1-4)-glycosidic bonds, yielding C1 or C4 oxidation products. Catalysis by LPMOs requires the reduction of the active-site copper from Cu(II) to Cu(I) by a reducing agent and H(2)O(2) or O(2) as a cosubstrate. Active on hemicelluloses, including xylan, glucomannan, and xyloglucan. Shows clear activity on cellooligosaccharides, generating C4 oxidation products. Has no activity on ivory nut mannan (INM), a linear beta-1,4-linked mannan without substitutions. This chain is AA9 family lytic polysaccharide monooxygenase F, found in Malbranchea cinnamomea (Thermophilic fungus).